We begin with the raw amino-acid sequence, 367 residues long: DNA polymerase IV (367 aa).

The UmuC domain occupies 14 to 198 (IIHIDMDAFF…LPIAKFHGVG (185 aa)). Residues Asp18 and Asp116 each contribute to the Mg(2+) site. Glu117 is an active-site residue.

The protein belongs to the DNA polymerase type-Y family. Monomer. Requires Mg(2+) as cofactor.

The protein localises to the cytoplasm. The enzyme catalyses DNA(n) + a 2'-deoxyribonucleoside 5'-triphosphate = DNA(n+1) + diphosphate. Functionally, poorly processive, error-prone DNA polymerase involved in untargeted mutagenesis. Copies undamaged DNA at stalled replication forks, which arise in vivo from mismatched or misaligned primer ends. These misaligned primers can be extended by PolIV. Exhibits no 3'-5' exonuclease (proofreading) activity. May be involved in translesional synthesis, in conjunction with the beta clamp from PolIII. This Streptococcus thermophilus (strain ATCC BAA-491 / LMD-9) protein is DNA polymerase IV.